Consider the following 282-residue polypeptide: MSNSILKVPDQNPQEIVALFSQQEAYAKLGKYKDEIWDVYQKVFIAALTTGETVLAKKCWNRLNDRFHKSPRVEGLYGMFLEATASEKDAMSYYNSKLSEDPTHTVIYKRKLALLRSMGQTKECIQGLINYLDTFYNDLEAWAELADIYVSVEAFESAIFCYEEMVLLQPFEPRLFARLGDLYFVLAQSNATNYWFSLKHYCRSVEICEEYFHGWFGISKCCQQLLELSRTELKRLLSKVNEKISDTFPDTESVRQLYQLSLKKSDLFAQKQPKLKALLEQC.

TPR repeat units lie at residues isoleucine 16–threonine 50, proline 71–histidine 104, leucine 139–glutamate 172, and arginine 174–tyrosine 211.

Its subcellular location is the cytoplasm. The protein resides in the nucleus. Its function is as follows. May be involved in cell cycle regulation. This chain is TPR repeat protein oca3 (oca3), found in Schizosaccharomyces pombe (strain 972 / ATCC 24843) (Fission yeast).